The sequence spans 410 residues: Multifunctional CCA protein (410 aa).

ATP contacts are provided by glycine 8 and arginine 11. Glycine 8 and arginine 11 together coordinate CTP. Residues aspartate 21 and aspartate 23 each coordinate Mg(2+). The ATP site is built by arginine 91, arginine 138, and arginine 141. CTP is bound by residues arginine 91, arginine 138, and arginine 141. The HD domain occupies 229-347 (TGIHQEMVSD…AQLALVCEAD (119 aa)).

The protein belongs to the tRNA nucleotidyltransferase/poly(A) polymerase family. Bacterial CCA-adding enzyme type 1 subfamily. In terms of assembly, monomer. Can also form homodimers and oligomers. It depends on Mg(2+) as a cofactor. The cofactor is Ni(2+).

The catalysed reaction is a tRNA precursor + 2 CTP + ATP = a tRNA with a 3' CCA end + 3 diphosphate. It catalyses the reaction a tRNA with a 3' CCA end + 2 CTP + ATP = a tRNA with a 3' CCACCA end + 3 diphosphate. In terms of biological role, catalyzes the addition and repair of the essential 3'-terminal CCA sequence in tRNAs without using a nucleic acid template. Adds these three nucleotides in the order of C, C, and A to the tRNA nucleotide-73, using CTP and ATP as substrates and producing inorganic pyrophosphate. tRNA 3'-terminal CCA addition is required both for tRNA processing and repair. Also involved in tRNA surveillance by mediating tandem CCA addition to generate a CCACCA at the 3' terminus of unstable tRNAs. While stable tRNAs receive only 3'-terminal CCA, unstable tRNAs are marked with CCACCA and rapidly degraded. This chain is Multifunctional CCA protein, found in Xanthomonas oryzae pv. oryzae (strain MAFF 311018).